A 249-amino-acid chain; its full sequence is Probable transcriptional regulatory protein ZMO0153 (249 aa).

Belongs to the TACO1 family.

It is found in the cytoplasm. The polypeptide is Probable transcriptional regulatory protein ZMO0153 (Zymomonas mobilis subsp. mobilis (strain ATCC 31821 / ZM4 / CP4)).